A 414-amino-acid polypeptide reads, in one-letter code: CinA-like protein (414 aa).

It belongs to the CinA family.

In Koribacter versatilis (strain Ellin345), this protein is CinA-like protein.